We begin with the raw amino-acid sequence, 112 residues long: Late expression factor 11 (112 aa).

The protein belongs to the baculoviridae LEF-11 family.

Functionally, involved in late/very late gene activation. This Helicoverpa zea (Corn earworm moth) protein is Late expression factor 11 (LEF-11).